The sequence spans 596 residues: Elongation factor 4 (596 aa).

The tr-type G domain occupies 2–184 (KHIRNFSIIA…VIVAQIPSPE (183 aa)). Residues 14–19 (DHGKST) and 131–134 (NKID) contribute to the GTP site.

This sequence belongs to the TRAFAC class translation factor GTPase superfamily. Classic translation factor GTPase family. LepA subfamily.

Its subcellular location is the cell inner membrane. It carries out the reaction GTP + H2O = GDP + phosphate + H(+). Functionally, required for accurate and efficient protein synthesis under certain stress conditions. May act as a fidelity factor of the translation reaction, by catalyzing a one-codon backward translocation of tRNAs on improperly translocated ribosomes. Back-translocation proceeds from a post-translocation (POST) complex to a pre-translocation (PRE) complex, thus giving elongation factor G a second chance to translocate the tRNAs correctly. Binds to ribosomes in a GTP-dependent manner. This is Elongation factor 4 from Shewanella sediminis (strain HAW-EB3).